We begin with the raw amino-acid sequence, 416 residues long: Enterobactin exporter EntS (416 aa).

The Cytoplasmic segment spans residues 1–21 (MNKQSWLLNLSLLKTHPAFRA). The chain crosses the membrane as a helical span at residues 22–42 (VFLARFISIVSLGLLGVAVPV). Residues 43–55 (QIQMMTHSTWQVG) are Periplasmic-facing. Residues 56–76 (LSVTLTGGAMFVGLMVGGVLA) form a helical membrane-spanning segment. Residues 77 to 83 (DRYERKK) lie on the Cytoplasmic side of the membrane. The helical transmembrane segment at 84 to 104 (VILLARGTCGIGFIGLCLNAL) threads the bilayer. At 105–109 (LPEPS) the chain is on the periplasmic side. A helical membrane pass occupies residues 110–130 (LLAIYLLGLWDGFFASLGVTA). At 131 to 156 (LLAATPALVGRENLMQAGAITMLTVR) the chain is on the cytoplasmic side. The helical transmembrane segment at 157–177 (LGSVISPMIGGLLLATGGVAW) threads the bilayer. Residue Asn-178 is a topological domain, periplasmic. The chain crosses the membrane as a helical span at residues 179 to 199 (YGLAAAGTFITLLPLLSLPAL). Over 200–218 (PPPPQPREHPLKSLLAGFR) the chain is Cytoplasmic. The chain crosses the membrane as a helical span at residues 219–239 (FLLASPLVGGIALLGGLLTMA). The Periplasmic portion of the chain corresponds to 240–256 (SAVRVLYPALADNWQMS). Residues 257–277 (AAQIGFLYAAIPLGAAIGALT) form a helical membrane-spanning segment. The Cytoplasmic portion of the chain corresponds to 278-287 (SGKLAHSARP). A helical transmembrane segment spans residues 288–307 (GLLMLLSTLGSFLAIGLFGL). At 308 to 313 (MPMWIL) the chain is on the periplasmic side. A helical transmembrane segment spans residues 314–336 (GVVCLALFGWLSAVSSLLQYTML). The Cytoplasmic segment spans residues 337 to 356 (QTQTPEAMLGRINGLWTAQN). The helical transmembrane segment at 357-377 (VTGDAIGAALLGGLGAMMTPV) threads the bilayer. Position 378 (Ala-378) is a topological domain, periplasmic. The chain crosses the membrane as a helical span at residues 379–399 (SASASGFGLLIIGVLLLLVLV). Over 400–416 (ELRHFRQTPPQVTASDS) the chain is Cytoplasmic.

It belongs to the major facilitator superfamily. EntS (TC 2.A.1.38) family.

It localises to the cell inner membrane. Functionally, component of an export pathway for enterobactin. In Escherichia coli (strain K12 / MC4100 / BW2952), this protein is Enterobactin exporter EntS.